A 4074-amino-acid polypeptide reads, in one-letter code: Fibrocystin (4074 aa).

The first 22 residues, 1–22, serve as a signal peptide directing secretion; it reads MIVWLISLMSIEILLLAGPALS. Asn-54 and Asn-224 each carry an N-linked (GlcNAc...) asparagine glycan. One can recognise an IPT/TIG 1 domain in the interval 258–310; it reads EILSVFPETGSLGGKTDIIITGDFFDNPALVTIAGVPCDIRHMSPRKIECTTR. Residues 323–483 form the PA14 domain; sequence AGNRGLLFEV…TWLNPDVVST (161 aa). N-linked (GlcNAc...) asparagine glycosylation is found at Asn-355, Asn-385, Asn-518, Asn-527, Asn-640, Asn-710, Asn-741, Asn-822, Asn-829, Asn-868, Asn-953, Asn-966, Asn-976, Asn-1006, Asn-1059, Asn-1083, Asn-1115, Asn-1134, Asn-1233, Asn-1240, Asn-1274, Asn-1284, Asn-1308, Asn-1319, Asn-1342, Asn-1373, Asn-1445, Asn-1456, Asn-1471, Asn-1490, Asn-1528, Asn-1560, Asn-1578, Asn-1598, Asn-1627, Asn-1694, Asn-1760, Asn-1775, Asn-1789, Asn-1875, Asn-1915, Asn-1941, Asn-1955, Asn-2030, Asn-2111, and Asn-2140. One can recognise an IPT/TIG 2 domain in the interval 944-1000; it reads SLLIYIFGINFSGDPQALEIMVNKTNCKVIFSNQTNVICQTDLLPVGMHRLFMVVRP. IPT/TIG domains lie at 1018–1101, 1107–1186, and 1199–1274; these read PRLD…AFTY, PVIT…RSPG, and SIEP…WAGN. The IPT/TIG 6 domain maps to 1385-1464; sequence PWIMAISPTH…LNVTVIVNGL (80 aa). The 69-residue stretch at 1573–1641 folds into the IPT/TIG 7 domain; that stretch reads HYFPKNFSIH…LVIEVDGLSY (69 aa). Residues 1928 to 2049 enclose the G8 1 domain; that stretch reads HSWFPERVPQ…PEVTFTHLQA (122 aa). PbH1 repeat units follow at residues 2245–2267, 2288–2322, 2351–2373, 2383–2404, and 2405–2427; these read TLGL…LVGT, EQGN…YILN, APLL…FIYP, RGPT…RISR, and SSNL…DILE. N-linked (GlcNAc...) asparagine glycosylation occurs at Asn-2390. N-linked (GlcNAc...) asparagine glycans are attached at residues Asn-2431, Asn-2467, Asn-2531, Asn-2549, Asn-2579, Asn-2591, Asn-2749, Asn-2764, Asn-2972, and Asn-3004. A PbH1 6 repeat occupies 2460-2483; that stretch reads RWELIISNTTFVNFDLTDCVSIRT. Residues 2743–2869 enclose the G8 2 domain; sequence EGWGGHNHTI…PKKSWTRLAA (127 aa). A PbH1 7 repeat occupies 3029 to 3051; it reads SHGIILNDNIVFGTVGHGIDLEG. The N-linked (GlcNAc...) asparagine glycan is linked to Asn-3053. A PbH1 8 repeat occupies 3082-3104; the sequence is AKDINLYGNVVAGSERIGFHIQG. Asn-3136, Asn-3165, Asn-3221, Asn-3484, Asn-3702, Asn-3721, and Asn-3833 each carry an N-linked (GlcNAc...) asparagine glycan. A PbH1 9 repeat occupies 3158–3183; the sequence is ENSVEIENITLVDNSIGLLATVYVSS. Residues 3854-3874 traverse the membrane as a helical segment; that stretch reads IILAVSLCSVASWLALCCLVC. The tract at residues 3871-3888 is ciliary targeting sequence (CST); that stretch reads CLVCCWFRKSKSRKIKSE. Disordered regions lie at residues 3896–3919, 3943–3965, and 4031–4074; these read NDQK…KEDT, NGVS…REED, and LQGQ…QEQL. 2 stretches are compositionally biased toward basic and acidic residues: residues 3910-3919 and 3954-3965; these read RSQETKKEDT and AVREEGSSREED. Residues 3947–3976 form a nuclear localization signal (NLS) region; the sequence is RRKVSRRAVREEGSSREEDVVPAPRIISIT.

As to quaternary structure, interacts with CAMLG. Interacts with PKD2. Interacts (via CST) with ARF4; this interaction allows an efficient PKHD1 trafficking to the cilium. Interacts (via CST) with RAB8A; this interaction controls trafficking through the endomembrane systeme and to the cilium. Interacts (via CST) with TULP3; this interaction allows PKHD1 trafficking to the cilium. Palmitoylated. Palmitoylation facilitates the trafficking to the cilia and membrane targeting. Post-translationally, N-glycosylated. In terms of processing, several proteolytic cleavages occur within the extracellular domain, whereas at least one cleavage occurs within the cytoplasmic domain. Cleaved by a probable proprotein convertase which produces an extracellular domain (polyductin extracellular domain, (PECD)) and a C-terminal fragment (polyductin transmembrane fragment (PTM)) which are tethered together by disulfide bonds. This extracellular domain (PECD) is then shed from the primary cilium by activation of a member of the ADAM metalloproteinase disintegrins family, resulting in concomitant release of an intra-cellular C-terminal fragment (ICD) via a gamma-secretase-dependent process. The proteolytic cleavage of the C-terminal intracellular fragment (ICD) is controlled by cytosolic calcium concentration and activation of PKC.

The protein resides in the cell membrane. It is found in the cytoplasm. Its subcellular location is the apical cell membrane. It localises to the cytoskeleton. The protein localises to the cilium basal body. The protein resides in the cell projection. It is found in the cilium. Its subcellular location is the spindle. It localises to the chromosome. The protein localises to the centromere. The protein resides in the nucleus. It is found in the secreted. Its subcellular location is the extracellular exosome. It localises to the endoplasmic reticulum. The protein localises to the golgi apparatus. In terms of biological role, promotes ciliogenesis in renal epithelial cells and therefore participates in the tubules formation and/ or ensures the maintenance of the architecture of the lumen of the kidney. Has an impact on cellular symmetry by ensuring correct bipolar cell division through the regulation of centrosome duplication and mitotic spindle assembly and by maintaining oriented cell division (OCD) during tubular elongation through planar cell polarity (PCP) pathway. During epithelial cell morphogenesis, it also regulates cell-cell and cell-matrix adhesion and participates in cell motility. Promotes cell-cell contact through the positive regulation of PTK2 kinase activity leading to either positive regulation of epithelial cell proliferation through the HRAS/RAF1 pathways, or negative regulation of apoptosis through the PDK1/AKT1 pathway. May act in collecting-duct and biliary differentiation. May participate in the regulation of the cholangiocytes proliferation and the CCN2 production in an CXCL8-dependent manner. The protein is Fibrocystin of Canis lupus familiaris (Dog).